The chain runs to 98 residues: NADH-ubiquinone oxidoreductase chain 4L (98 aa).

3 helical membrane-spanning segments follow: residues 1 to 21, 24 to 44, and 61 to 81; these read MSSY…GILL, LHLL…FIWI, and LILL…MVAL.

The protein belongs to the complex I subunit 4L family.

It is found in the mitochondrion membrane. It catalyses the reaction a ubiquinone + NADH + 5 H(+)(in) = a ubiquinol + NAD(+) + 4 H(+)(out). Functionally, core subunit of the mitochondrial membrane respiratory chain NADH dehydrogenase (Complex I) that is believed to belong to the minimal assembly required for catalysis. Complex I functions in the transfer of electrons from NADH to the respiratory chain. The immediate electron acceptor for the enzyme is believed to be ubiquinone. The polypeptide is NADH-ubiquinone oxidoreductase chain 4L (ND4L) (Pisaster ochraceus (Ochre sea star)).